Here is a 299-residue protein sequence, read N- to C-terminus: Protease HtpX homolog (299 aa).

2 helical membrane passes run M15 to Q35 and G37 to F57. Residue H140 participates in Zn(2+) binding. Residue E141 is part of the active site. Residue H144 participates in Zn(2+) binding. 2 helical membrane-spanning segments follow: residues F158–G178 and N187–I207. E215 lines the Zn(2+) pocket.

This sequence belongs to the peptidase M48B family. Requires Zn(2+) as cofactor.

Its subcellular location is the cell membrane. The sequence is that of Protease HtpX homolog from Moorella thermoacetica (strain ATCC 39073 / JCM 9320).